The chain runs to 86 residues: Large ribosomal subunit protein bL27 (86 aa).

Residues 1 to 10 are compositionally biased toward gly residues; the sequence is MAQKKGGGST. The disordered stretch occupies residues 1–21; the sequence is MAQKKGGGSTRNGRDSESKRL.

The protein belongs to the bacterial ribosomal protein bL27 family.

This is Large ribosomal subunit protein bL27 from Bordetella petrii (strain ATCC BAA-461 / DSM 12804 / CCUG 43448).